Reading from the N-terminus, the 217-residue chain is 8-oxoguanine DNA glycosylase/AP lyase (217 aa).

Catalysis depends on residues K138 and D157.

It belongs to the type-2 OGG1 family.

The catalysed reaction is 2'-deoxyribonucleotide-(2'-deoxyribose 5'-phosphate)-2'-deoxyribonucleotide-DNA = a 3'-end 2'-deoxyribonucleotide-(2,3-dehydro-2,3-deoxyribose 5'-phosphate)-DNA + a 5'-end 5'-phospho-2'-deoxyribonucleoside-DNA + H(+). Catalyzes the excision of an oxidatively damaged form of guanine (7,8-dihydro-8-oxoguanine = 8-oxoG) from DNA. Also cleaves the DNA backbone at apurinic/apyrimidinic sites (AP sites). This chain is 8-oxoguanine DNA glycosylase/AP lyase, found in Fusobacterium nucleatum subsp. nucleatum (strain ATCC 25586 / DSM 15643 / BCRC 10681 / CIP 101130 / JCM 8532 / KCTC 2640 / LMG 13131 / VPI 4355).